The primary structure comprises 308 residues: NADH-cytochrome b5 reductase 1 (308 aa).

The chain crosses the membrane as a helical span at residues 10–27 (INGVYIPSALLIFGTTII). Residues 59-164 (TEFQNFVLKD…RGPKGAMVYT (106 aa)) enclose the FAD-binding FR-type domain. Residues 144 to 159 (TTLR…GPKG) and 170 to 207 (HIGM…QIDL) contribute to the FAD site.

The protein belongs to the flavoprotein pyridine nucleotide cytochrome reductase family. In terms of assembly, monomer. Component of the 2-(3-amino-3-carboxypropyl)histidine synthase complex composed of DPH1, DPH2, DPH3 and a NADH-dependent reductase, predominantly CBR1. FAD serves as cofactor.

Its subcellular location is the mitochondrion outer membrane. The enzyme catalyses 2 Fe(III)-[cytochrome b5] + NADH = 2 Fe(II)-[cytochrome b5] + NAD(+) + H(+). The catalysed reaction is 2 Fe(3+)-[Dph3] + NADH = 2 Fe(2+)-[Dph3] + NAD(+) + H(+). It functions in the pathway protein modification; peptidyl-diphthamide biosynthesis. NADH-dependent reductase for DPH3 and cytochrome b5. Required for the first step of diphthamide biosynthesis, a post-translational modification of histidine which occurs in elongation factor 2. DPH1 and DPH2 transfer a 3-amino-3-carboxypropyl (ACP) group from S-adenosyl-L-methionine (SAM) to a histidine residue, the reaction is assisted by a reduction system comprising DPH3 and a NADH-dependent reductase, predominantly CBR1. By reducing DPH3, also involved in the formation of the tRNA wobble base modification mcm5s 2U (5-methoxycarbonylmethyl-2-thiouridine), mediated by the elongator complex. The cytochrome b5/NADH cytochrome b5 reductase electron transfer system supports the catalytic activity of several sterol biosynthetic enzymes. The sequence is that of NADH-cytochrome b5 reductase 1 (CBR1) from Coccidioides immitis (strain RS) (Valley fever fungus).